A 174-amino-acid chain; its full sequence is 3-hydroxydecanoyl-[acyl-carrier-protein] dehydratase (174 aa).

The active site involves histidine 71.

This sequence belongs to the thioester dehydratase family. FabA subfamily. In terms of assembly, homodimer.

The protein resides in the cytoplasm. The catalysed reaction is a (3R)-hydroxyacyl-[ACP] = a (2E)-enoyl-[ACP] + H2O. It catalyses the reaction (3R)-hydroxydecanoyl-[ACP] = (2E)-decenoyl-[ACP] + H2O. It carries out the reaction (2E)-decenoyl-[ACP] = (3Z)-decenoyl-[ACP]. It participates in lipid metabolism; fatty acid biosynthesis. In terms of biological role, necessary for the introduction of cis unsaturation into fatty acids. Catalyzes the dehydration of (3R)-3-hydroxydecanoyl-ACP to E-(2)-decenoyl-ACP and then its isomerization to Z-(3)-decenoyl-ACP. Can catalyze the dehydratase reaction for beta-hydroxyacyl-ACPs with saturated chain lengths up to 16:0, being most active on intermediate chain length. The polypeptide is 3-hydroxydecanoyl-[acyl-carrier-protein] dehydratase (Nitrobacter winogradskyi (strain ATCC 25391 / DSM 10237 / CIP 104748 / NCIMB 11846 / Nb-255)).